Reading from the N-terminus, the 369-residue chain is Protein phosphatase 1 regulatory inhibitor subunit PPP1R8 homolog (369 aa).

Residues 1 to 11 (MYGRSGLDRFK) show a composition bias toward basic and acidic residues. The disordered stretch occupies residues 1–26 (MYGRSGLDRFKKSQTSEPFSVSANPP). Positions 13 to 23 (SQTSEPFSVSA) are enriched in polar residues. Positions 87 to 138 (HIFGRQHQTCDFVLDHQSVSRQHAAVVPHKNGSIFVIDLGSAHGTFVANERL) constitute an FHA domain. Residues 345 to 369 (VSQPAAETECGGVGEEDDNDDLFGD) are disordered. The segment covering 358–369 (GEEDDNDDLFGD) has biased composition (acidic residues).

In terms of assembly, interacts with human protein phosphatase PPP1C.

Functionally, inhibitor of protein-phosphatase 1 (PP1). Binds to and inhibits PP1 activity. The polypeptide is Protein phosphatase 1 regulatory inhibitor subunit PPP1R8 homolog (Arabidopsis thaliana (Mouse-ear cress)).